The following is a 561-amino-acid chain: MANRPSLMPPHNETEHSVSRITREGKQLTYKLSVMQQPERARACGAGAKSSADRRPVDPPPVVELRIFESDPANDTQKTDITFAYNANFFLYATLETARPIAHGRVGGPQSCPVLTGVPVAGVAYLDRPSQAGYFIFPDLSVRHEGRYRLSFHLYEEIKDAKDADKDSTLPLPNQIPLSATSKPGIPQAFLHFRLEVKSVPFTVYSAKKFPGLATSTSLSRIIAEQGCRVRIRRDVRMRRRGDKRDEDYEFGEERAAAYARSSDRFTTPDRYAASMDRPRSNSNGSNIESPYGFVPPDRRPSAPDYGFQCPQPYQRPMPPAPMSHSQTPSYQSHLSFGSTPSHYPAPHMPPTPPPVAPQGIYSPQHAYAQIRHPSNGSEYEGTPIAYPAPQIPVERGGYPKPPMSSYAMDPPKPNSYMDPRMPEPSLYPSTPNVPVSRPQTPNLPAMPPPKPLSNDYANHVVPSVECTSPGGSGGGGYDNVRGKRMVYQTGPTYGKRSHEDTFGLDDRSMQNGMRPDTEPYPAYRDFSGESRAALMAEMGIQLSYKRANGKIVMKAPPSST.

Disordered regions lie at residues 1-23, 41-60, and 258-361; these read MANR…RITR, ARAC…VDPP, and AYAR…PQGI. Residues 12–23 show a composition bias toward basic and acidic residues; the sequence is NETEHSVSRITR. The 209-residue stretch at 25–233 folds into the Velvet domain; that stretch reads GKQLTYKLSV…AEQGCRVRIR (209 aa). Positions 39-44 match the Nuclear localization signal motif; sequence ERARAC. Residues 258–268 are compositionally biased toward basic and acidic residues; that stretch reads AYARSSDRFTT. Positions 324 to 339 are enriched in polar residues; that stretch reads SHSQTPSYQSHLSFGS. Pro residues predominate over residues 347 to 357; it reads PHMPPTPPPVA. Positions 438-485 are PEST; the sequence is RPQTPNLPAMPPPKPLSNDYANHVVPSVECTSPGGSGGGGYDNVRGKR. The segment at 491–524 is disordered; sequence GPTYGKRSHEDTFGLDDRSMQNGMRPDTEPYPAY. Residues 497–509 are compositionally biased toward basic and acidic residues; it reads RSHEDTFGLDDRS.

This sequence belongs to the velvet family. VeA subfamily. As to quaternary structure, component of the heterotrimeric velvet complex composed of laeA, veA and velB; velA acting as a bridging protein between laeA and velB. Interacts with kapA. Interacts with vosA and velc.

The protein localises to the nucleus. Its subcellular location is the cytoplasm. Functionally, component of the velvet transcription factor complex that controls sexual/asexual developmental ratio in response to light, promoting sexual development in the darkness while stimulating asexual sporulation under illumination. The velvet complex acts as a global regulator for secondary metabolite gene expression. Controls the expression of the penicillin gene cluster. Positively controls the expression of the class V chitinase chiB1. Positively controls the expression of the transcription factor atfA. Required for cell wall integrity and controls hyphal branching. The polypeptide is Developmental and secondary metabolism regulator veA (Penicillium rubens (strain ATCC 28089 / DSM 1075 / NRRL 1951 / Wisconsin 54-1255) (Penicillium chrysogenum)).